The chain runs to 165 residues: REP-associated tyrosine transposase (165 aa).

This sequence belongs to the transposase 17 family. RAYT subfamily. In terms of assembly, monomer.

Cleavage occurs in the presence of magnesium, but is much more pronounced with manganese. Functionally, transposase that is always flanked by repeated extragenic palindrome (REP) sequences, which are clustered in structures called bacterial interspersed mosaic elements (BIMEs). RayT catalyzes cleavage and recombination of BIMEs. Binds REP sequences and cleaves BIMEs both upstream and downstream of the REP sequence. Could be important in the creation of BIME variability and amplification. The polypeptide is REP-associated tyrosine transposase (Escherichia coli (strain K12)).